A 301-amino-acid chain; its full sequence is tRNA pseudouridine synthase B (301 aa).

The active-site Nucleophile is the aspartate 38.

It belongs to the pseudouridine synthase TruB family. Type 1 subfamily.

The catalysed reaction is uridine(55) in tRNA = pseudouridine(55) in tRNA. Its function is as follows. Responsible for synthesis of pseudouridine from uracil-55 in the psi GC loop of transfer RNAs. In Clostridioides difficile (strain 630) (Peptoclostridium difficile), this protein is tRNA pseudouridine synthase B.